We begin with the raw amino-acid sequence, 272 residues long: Endoplasmic reticulum resident protein 27 (272 aa).

The signal sequence occupies residues 1–25 (MKITRSRCLILSFVLVCGLVPEVTA). One can recognise a Thioredoxin domain in the interval 39–152 (EPIWLTDVPA…WVTEYSPMIA (114 aa)). 2 N-linked (GlcNAc...) asparagine glycosylation sites follow: Asn-91 and Asn-100. The PDIA3-binding site stretch occupies residues 230 to 233 (DKWD). The Prevents secretion from ER signature appears at 269–272 (KEEL).

The protein belongs to the protein disulfide isomerase family. As to quaternary structure, interacts with PDIA3.

The protein localises to the endoplasmic reticulum lumen. Specifically binds unfolded proteins and may recruit protein disulfide isomerase PDIA3 to unfolded substrates. Binds protein substrates via a hydrophobic pocket in the C-terminal domain. May play a role in the unfolded stress response. The sequence is that of Endoplasmic reticulum resident protein 27 (Erp27) from Mus musculus (Mouse).